The following is a 440-amino-acid chain: Tryptophan synthase beta chain (440 aa).

K110 is modified (N6-(pyridoxal phosphate)lysine).

This sequence belongs to the TrpB family. As to quaternary structure, tetramer of two alpha and two beta chains. It depends on pyridoxal 5'-phosphate as a cofactor.

It carries out the reaction (1S,2R)-1-C-(indol-3-yl)glycerol 3-phosphate + L-serine = D-glyceraldehyde 3-phosphate + L-tryptophan + H2O. It participates in amino-acid biosynthesis; L-tryptophan biosynthesis; L-tryptophan from chorismate: step 5/5. Its function is as follows. The beta subunit is responsible for the synthesis of L-tryptophan from indole and L-serine. In Thermococcus gammatolerans (strain DSM 15229 / JCM 11827 / EJ3), this protein is Tryptophan synthase beta chain.